The chain runs to 296 residues: uncharacterized protein (296 aa).

The helical transmembrane segment at 7 to 26 (CFSLVCALGASTYLLWRGWL) threads the bilayer.

It is found in the membrane. This is an uncharacterized protein from Treponema pallidum (strain Nichols).